The primary structure comprises 740 residues: Catalase-peroxidase (740 aa).

The tryptophyl-tyrosyl-methioninium (Trp-Tyr) (with M-256) cross-link spans 102–229 (WHAAGTYRTG…LAAIQMGLIY (128 aa)). Residue His103 is the Proton acceptor of the active site. Positions 111 to 130 (GDGRGGSSSGQQRFAPLNSW) are disordered. Residues 229–256 (YVNPEGPGGDPHDPEGMARDMRETFARM) constitute a cross-link (tryptophyl-tyrosyl-methioninium (Tyr-Met) (with W-102)). His271 provides a ligand contact to heme b.

Belongs to the peroxidase family. Peroxidase/catalase subfamily. As to quaternary structure, homodimer or homotetramer. The cofactor is heme b. In terms of processing, formation of the three residue Trp-Tyr-Met cross-link is important for the catalase, but not the peroxidase activity of the enzyme.

It carries out the reaction H2O2 + AH2 = A + 2 H2O. The catalysed reaction is 2 H2O2 = O2 + 2 H2O. Bifunctional enzyme with both catalase and broad-spectrum peroxidase activity. In Erythrobacter litoralis (strain HTCC2594), this protein is Catalase-peroxidase.